The sequence spans 479 residues: Ribulose bisphosphate carboxylase large chain 2 (479 aa).

Residues asparagine 116 and threonine 166 each coordinate substrate. Catalysis depends on lysine 168, which acts as the Proton acceptor. Lysine 170 is a binding site for substrate. Positions 194, 196, and 197 each coordinate Mg(2+). Residue lysine 194 is modified to N6-carboxylysine. Histidine 287 acts as the Proton acceptor in catalysis. Arginine 288, histidine 320, and serine 372 together coordinate substrate.

Belongs to the RuBisCO large chain family. Type I subfamily. As to quaternary structure, heterohexadecamer of 8 large chains and 8 small chains. The cofactor is Mg(2+).

The enzyme catalyses 2 (2R)-3-phosphoglycerate + 2 H(+) = D-ribulose 1,5-bisphosphate + CO2 + H2O. It carries out the reaction D-ribulose 1,5-bisphosphate + O2 = 2-phosphoglycolate + (2R)-3-phosphoglycerate + 2 H(+). RuBisCO catalyzes two reactions: the carboxylation of D-ribulose 1,5-bisphosphate, the primary event in carbon dioxide fixation, as well as the oxidative fragmentation of the pentose substrate. Both reactions occur simultaneously and in competition at the same active site. This chain is Ribulose bisphosphate carboxylase large chain 2, found in Bradyrhizobium sp. (strain ORS 278).